Here is a 292-residue protein sequence, read N- to C-terminus: Light-independent protochlorophyllide reductase iron-sulfur ATP-binding protein (292 aa).

ATP is bound by residues 10–15 (GIGKST) and K39. S14 lines the Mg(2+) pocket. Position 95 (C95) interacts with [4Fe-4S] cluster. 182–183 (NR) is a binding site for ATP.

It belongs to the NifH/BchL/ChlL family. Homodimer. Protochlorophyllide reductase is composed of three subunits; ChlL, ChlN and ChlB. [4Fe-4S] cluster serves as cofactor.

The protein resides in the plastid. The protein localises to the chloroplast. It catalyses the reaction chlorophyllide a + oxidized 2[4Fe-4S]-[ferredoxin] + 2 ADP + 2 phosphate = protochlorophyllide a + reduced 2[4Fe-4S]-[ferredoxin] + 2 ATP + 2 H2O. The protein operates within porphyrin-containing compound metabolism; chlorophyll biosynthesis (light-independent). Its function is as follows. Component of the dark-operative protochlorophyllide reductase (DPOR) that uses Mg-ATP and reduced ferredoxin to reduce ring D of protochlorophyllide (Pchlide) to form chlorophyllide a (Chlide). This reaction is light-independent. The L component serves as a unique electron donor to the NB-component of the complex, and binds Mg-ATP. In Huperzia lucidula (Shining clubmoss), this protein is Light-independent protochlorophyllide reductase iron-sulfur ATP-binding protein.